The chain runs to 284 residues: ATP phosphoribosyltransferase (284 aa).

The protein belongs to the ATP phosphoribosyltransferase family. Long subfamily. Mg(2+) serves as cofactor.

It localises to the cytoplasm. It carries out the reaction 1-(5-phospho-beta-D-ribosyl)-ATP + diphosphate = 5-phospho-alpha-D-ribose 1-diphosphate + ATP. It functions in the pathway amino-acid biosynthesis; L-histidine biosynthesis; L-histidine from 5-phospho-alpha-D-ribose 1-diphosphate: step 1/9. Its activity is regulated as follows. Feedback inhibited by histidine. Functionally, catalyzes the condensation of ATP and 5-phosphoribose 1-diphosphate to form N'-(5'-phosphoribosyl)-ATP (PR-ATP). Has a crucial role in the pathway because the rate of histidine biosynthesis seems to be controlled primarily by regulation of HisG enzymatic activity. In Methanococcoides burtonii (strain DSM 6242 / NBRC 107633 / OCM 468 / ACE-M), this protein is ATP phosphoribosyltransferase.